Consider the following 79-residue polypeptide: Defensin-like protein 54 (79 aa).

The N-terminal stretch at 1–27 (MGIKKTSATVFLVIILTISFSYYDVEA) is a signal peptide. 4 disulfides stabilise this stretch: cysteine 39/cysteine 76, cysteine 43/cysteine 67, cysteine 52/cysteine 74, and cysteine 56/cysteine 75.

It belongs to the DEFL family.

Its subcellular location is the secreted. This Arabidopsis thaliana (Mouse-ear cress) protein is Defensin-like protein 54.